A 200-amino-acid chain; its full sequence is ATP-dependent Clp protease proteolytic subunit (200 aa).

The active-site Nucleophile is Ser96. The active site involves His121.

It belongs to the peptidase S14 family. Fourteen ClpP subunits assemble into 2 heptameric rings which stack back to back to give a disk-like structure with a central cavity, resembling the structure of eukaryotic proteasomes.

It is found in the cytoplasm. The catalysed reaction is Hydrolysis of proteins to small peptides in the presence of ATP and magnesium. alpha-casein is the usual test substrate. In the absence of ATP, only oligopeptides shorter than five residues are hydrolyzed (such as succinyl-Leu-Tyr-|-NHMec, and Leu-Tyr-Leu-|-Tyr-Trp, in which cleavage of the -Tyr-|-Leu- and -Tyr-|-Trp bonds also occurs).. Its function is as follows. Cleaves peptides in various proteins in a process that requires ATP hydrolysis. Has a chymotrypsin-like activity. Plays a major role in the degradation of misfolded proteins. This chain is ATP-dependent Clp protease proteolytic subunit, found in Leuconostoc citreum (strain KM20).